A 193-amino-acid chain; its full sequence is MRLSDTDIEEWLSKKKLVIQPYPKKQLINGITVDIHLGNKFRFFYDHTTSCIDLSGSKEKIALDLNKIVSCETIFSKKEPFFLKPGALALFSTLENITLPNNLVGWLDGRSSLARLGLMVHVTSHRIDPGWHGNIVLEFFNAGKLTLVLTPGIKIAALSFELLSKPVLRPYNSRNESKYKRQNGVVPSRIYEE.

DCTP contacts are provided by residues 110–115, aspartate 128, 136–138, tyrosine 171, lysine 178, and glutamine 182; these read RSSLAR and VLE. Residue glutamate 138 is the Proton donor/acceptor of the active site.

The protein belongs to the dCTP deaminase family. Homotrimer.

It carries out the reaction dCTP + H2O + H(+) = dUTP + NH4(+). The protein operates within pyrimidine metabolism; dUMP biosynthesis; dUMP from dCTP (dUTP route): step 1/2. Catalyzes the deamination of dCTP to dUTP. In Buchnera aphidicola subsp. Schizaphis graminum (strain Sg), this protein is dCTP deaminase.